Here is a 471-residue protein sequence, read N- to C-terminus: Thiohydroximate-O-sulfate sulfur/sulfate-lyase (nitrile-forming) NSP2 (471 aa).

In terms of domain architecture, Jacalin-type lectin spans 2-144 (VQKVEARGGE…LHSLGAYISS (143 aa)). 6 Kelch repeats span residues 178–226 (KIFS…VRMV), 231–277 (SLYV…SMTA), 281–330 (NVYV…VVQG), 332–379 (VWVV…VVGK), 381–435 (ILVF…GWSA), and 446–471 (GLVM…VDSA). R238 (proton donor) is an active-site residue. Positions 238, 271, 293, 322, and 371 each coordinate a (Z)-N-(sulfonatooxy)alkanimidothioate. R293 (proton donor) is an active-site residue. E387, D391, and H395 together coordinate Fe(2+). Residue W433 participates in a (Z)-N-(sulfonatooxy)alkanimidothioate binding.

Belongs to the jacalin lectin family. Fe(2+) serves as cofactor. In terms of tissue distribution, expressed only in seeds.

The enzyme catalyses a (Z)-N-(sulfonatooxy)alkanimidothioate = a nitrile + sulfur + sulfate. The catalysed reaction is (Z)-phenyl-N-(sulfonatooxy)methanimidothioate = phenylacetonitrile + sulfur + sulfate. It carries out the reaction (Z)-N-(sulfonatooxy)prop-2-enimidothioate = but-3-enenitrile + sulfur + sulfate. It catalyses the reaction (Z)-(indol-3-yl)-N-(sulfonatooxy)methanimidothioate = (indol-3-yl)acetonitrile + sulfur + sulfate. The presence of Fe(2+) supports lyase activity in a dose-dependent manner with both benzylglucosinolate and 2-propenylglucosinolate as substrates. More active at pH 7.4 than at pH 6. Specifier protein responsible for constitutive and herbivore-induced simple nitrile formation, especially in seeds. Promotes simple nitriles, but not epithionitrile or thiocyanate formation. Converts allylglucosinolate (allyl-GSL), 2-propenylglucosinolate (sinigrin), indol-3-ylmethylglucosinolate (glucobrassicin), benzylisothiocyanate and benzylglucosinolate (glucotropaeolin) to their corresponding simple nitriles in the presence of myrosinase. Catalyzes mainly the conversion of benzylisothiocyanate when benzylglucosinolate is used as the initial substrate of myrosinase. Involved in the regulation of glucosinolate content in seeds, during stratification and germination. The sequence is that of Thiohydroximate-O-sulfate sulfur/sulfate-lyase (nitrile-forming) NSP2 from Arabidopsis thaliana (Mouse-ear cress).